An 853-amino-acid polypeptide reads, in one-letter code: MICAL-like protein 1 (853 aa).

The Calponin-homology (CH) domain maps to 2-108; that stretch reads AGPRGALLAW…YVSQYYNHFA (107 aa). 2 disordered regions span residues 118–162 and 224–659; these read PRKG…TPSS and SGRS…FPLI. Polar residues predominate over residues 145 to 162; sequence ECSSGSLSKQGSHRTPSS. Residues 162-224 form the LIM zinc-binding domain; it reads STCAACQQHV…AEHCARLGPS (63 aa). Ser-292 and Ser-306 each carry phosphoserine. Phosphothreonine is present on residues Thr-312 and Thr-315. Basic and acidic residues predominate over residues 355–366; the sequence is LSERTPAPRKDP. The span at 381 to 394 shows a compositional bias: pro residues; sequence APLPPSSSPGPPPG. Position 388 is a phosphoserine (Ser-388). Residues 419 to 421 carry the NPF1 motif; it reads NPF. Residues 429–445 are compositionally biased toward pro residues; the sequence is PAAPSPAPGPAPTPPES. Thr-457 and Thr-459 each carry phosphothreonine. Phosphoserine is present on residues Ser-460, Ser-461, Ser-474, and Ser-476. 2 stretches are compositionally biased toward low complexity: residues 495–515 and 541–553; these read PSPA…APSE and SASL…LSSS. Phosphoserine occurs at positions 568 and 611. The segment covering 607–618 has biased composition (polar residues); that stretch reads PGTSSPQLQVKS. The NPF2 signature appears at 623-625; that stretch reads NPF. The interval 642–853 is mediates the interaction with RAB13 and RAB35 and intramolecular interaction with the CH domain; the sequence is KGSKPARPPA…TKSKCPGDRS (212 aa). Positions 661–808 constitute a bMERB domain; it reads RKVQSDQYIP…EEEEDKMLEA (148 aa). Positions 671–701 form a coiled coil; that stretch reads EEDIHGEIDTIERQLDALEHRGVLLEEKLRG. The interval 690-853 is necessary and sufficient to associate with tubular recycling endosome membranes, mediate phosphatidic acid-binding and membrane tubulation; that stretch reads HRGVLLEEKL…TKSKCPGDRS (164 aa). The residue at position 730 (Ser-730) is a Phosphoserine. A coiled-coil region spans residues 791–820; sequence CLDEDRQREEEEDKMLEAMIKKKEFQKETE.

Homooligomer. Interacts (via NPF1 motif) with EHD1 (via EH domain); the interaction is direct and probably recruits EHD1 to membranes. Interacts with EHD3 (via EH domain). Interacts with RAB35 (GTP-bound form); the interaction is direct and probably recruits MICALL1 to membranes. Interacts with ACAP2; the interaction is indirect through RAB35. Interacts with RAB8A (GTP-bound form); regulates RAB8A association with recycling endosomes. Interacts with RAB13 (GTP-bound form). Interacts with ARF6 (GTP-bound form). Interacts with PACSIN2 (via the SH3 domain). Interacts with DPYSL2.

It localises to the recycling endosome membrane. The protein resides in the late endosome membrane. It is found in the cell projection. The protein localises to the cilium membrane. Its subcellular location is the cytoplasm. It localises to the cytoskeleton. The protein resides in the microtubule organizing center. It is found in the centrosome. The protein localises to the centriole. Its function is as follows. Lipid-binding protein with higher affinity for phosphatidic acid, a lipid enriched in recycling endosome membranes. On endosome membranes, acts as a downstream effector of Rab proteins recruiting cytosolic proteins to regulate membrane tubulation. Involved in a late step of receptor-mediated endocytosis regulating for instance endocytosed-EGF receptor trafficking. Alternatively, regulates slow endocytic recycling of endocytosed proteins back to the plasma membrane. Also involved in cargo protein delivery to the plasma membrane. Plays a role in ciliogenesis coordination, recruits EHD1 to primary cilium where it is anchored to the centriole through interaction with tubulins. May indirectly play a role in neurite outgrowth. The polypeptide is MICAL-like protein 1 (MICALL1) (Bos taurus (Bovine)).